Here is a 540-residue protein sequence, read N- to C-terminus: Cystathionine gamma-synthase 1, chloroplastic (540 aa).

The N-terminal 78 residues, 1–78, are a transit peptide targeting the chloroplast; sequence MAVSSCARAF…RNCSNIGVAQ (78 aa). Pyridoxal 5'-phosphate-binding residues include tyrosine 203, arginine 205, glycine 233, methionine 234, tyrosine 258, serine 353, and threonine 355. The residue at position 356 (lysine 356) is an N6-(pyridoxal phosphate)lysine.

The protein belongs to the trans-sulfuration enzymes family. In terms of assembly, forms homotetramers composed of 2 homodimers. Requires pyridoxal 5'-phosphate as cofactor.

The protein resides in the plastid. The protein localises to the chloroplast. It carries out the reaction O-phospho-L-homoserine + L-cysteine = L,L-cystathionine + phosphate. It catalyses the reaction O-succinyl-L-homoserine + L-cysteine = L,L-cystathionine + succinate + H(+). It functions in the pathway amino-acid biosynthesis; L-methionine biosynthesis via de novo pathway; L-cystathionine from O-succinyl-L-homoserine: step 1/1. With respect to regulation, irreversibly inactivated by DL-propargylglycine. Its function is as follows. Catalyzes the first committed step of methionine (Met) biosynthesis. Catalyzes the formation of L-cystathionine from homoserine esters and L-cysteine, via a gamma-replacement reaction. The polypeptide is Cystathionine gamma-synthase 1, chloroplastic (Nicotiana tabacum (Common tobacco)).